The following is a 168-amino-acid chain: ATP synthase subunit b (168 aa).

A helical transmembrane segment spans residues 9-29 (AIPFGTIAYTLFIFLILLVML).

The protein belongs to the ATPase B chain family. F-type ATPases have 2 components, F(1) - the catalytic core - and F(0) - the membrane proton channel. F(1) has five subunits: alpha(3), beta(3), gamma(1), delta(1), epsilon(1). F(0) has three main subunits: a(1), b(2) and c(10-14). The alpha and beta chains form an alternating ring which encloses part of the gamma chain. F(1) is attached to F(0) by a central stalk formed by the gamma and epsilon chains, while a peripheral stalk is formed by the delta and b chains.

The protein localises to the cell membrane. Functionally, f(1)F(0) ATP synthase produces ATP from ADP in the presence of a proton or sodium gradient. F-type ATPases consist of two structural domains, F(1) containing the extramembraneous catalytic core and F(0) containing the membrane proton channel, linked together by a central stalk and a peripheral stalk. During catalysis, ATP synthesis in the catalytic domain of F(1) is coupled via a rotary mechanism of the central stalk subunits to proton translocation. Component of the F(0) channel, it forms part of the peripheral stalk, linking F(1) to F(0). The polypeptide is ATP synthase subunit b (Bacillus cereus (strain G9842)).